The sequence spans 463 residues: Chromosomal replication initiator protein DnaA (463 aa).

Positions 1 to 83 (MSLSLWQQCL…LRFEVGSKPI (83 aa)) are domain I, interacts with DnaA modulators. The domain II stretch occupies residues 83 to 126 (IVPVAVSSAASSGASVPPAAVRASSLARPSWERVTAQPELSYRS). Residues 127 to 343 (NVNPKHTFDN…GALNRVIANA (217 aa)) form a domain III, AAA+ region region. ATP is bound by residues Gly171, Gly173, Lys174, and Thr175. The segment at 344-463 (NFTGRAITID…FSNLIRTLSS (120 aa)) is domain IV, binds dsDNA.

The protein belongs to the DnaA family. Oligomerizes as a right-handed, spiral filament on DNA at oriC.

It is found in the cytoplasm. In terms of biological role, plays an essential role in the initiation and regulation of chromosomal replication. ATP-DnaA binds to the origin of replication (oriC) to initiate formation of the DNA replication initiation complex once per cell cycle. Binds the DnaA box (a 9 base pair repeat at the origin) and separates the double-stranded (ds)DNA. Forms a right-handed helical filament on oriC DNA; dsDNA binds to the exterior of the filament while single-stranded (ss)DNA is stabiized in the filament's interior. The ATP-DnaA-oriC complex binds and stabilizes one strand of the AT-rich DNA unwinding element (DUE), permitting loading of DNA polymerase. After initiation quickly degrades to an ADP-DnaA complex that is not apt for DNA replication. Binds acidic phospholipids. The sequence is that of Chromosomal replication initiator protein DnaA from Edwardsiella ictaluri (strain 93-146).